The chain runs to 252 residues: Hydroxyacylglutathione hydrolase (252 aa).

Zn(2+) is bound by residues His54, His56, Asp58, His59, His113, Asp132, and His170.

Belongs to the metallo-beta-lactamase superfamily. Glyoxalase II family. Monomer. The cofactor is Zn(2+).

It catalyses the reaction an S-(2-hydroxyacyl)glutathione + H2O = a 2-hydroxy carboxylate + glutathione + H(+). Its pathway is secondary metabolite metabolism; methylglyoxal degradation; (R)-lactate from methylglyoxal: step 2/2. Its function is as follows. Thiolesterase that catalyzes the hydrolysis of S-D-lactoyl-glutathione to form glutathione and D-lactic acid. The chain is Hydroxyacylglutathione hydrolase from Synechococcus sp. (strain JA-2-3B'a(2-13)) (Cyanobacteria bacterium Yellowstone B-Prime).